A 106-amino-acid polypeptide reads, in one-letter code: Transcriptional and immune response regulator (106 aa).

As to quaternary structure, monomer. Interacts with NOTCH2 (via ANK repeats), the interaction inhibits the nuclear translocation of NOTCH2 N2ICD. Interacts (C-terminus) with CBY1 (C-terminus), TCIM competes with CTNNB1 for the interaction with CBY1. In terms of tissue distribution, expressed in liver, expression levels decrease in regenerating liver. In bone marrow, expressed in large progenitor-like cells, cells with ring-shaped nuclei and, at lower, levels in hematopietic stem cell-like cells with round nuclei (at protein level).

It localises to the cytoplasm. The protein resides in the nucleus. The protein localises to the nucleolus. It is found in the nucleus speckle. In terms of biological role, seems to be involved in the regulation of cell growth an differentiation, may play different and opposite roles depending on the tissue or cell type. May enhance the WNT-CTNNB1 pathway by relieving antagonistic activity of CBY1. Enhances the proliferation of follicular dendritic cells. Plays a role in the mitogen-activated MAPK2/3 signaling pathway, positively regulates G1-to-S-phase transition of the cell cycle. In endothelial cells, enhances key inflammatory mediators and inflammatory response through the modulation of NF-kappaB transcriptional regulatory activity. Involved in the regulation of heat shock response, seems to play a positive feedback with HSF1 to modulate heat-shock downstream gene expression. Plays a role in the regulation of hematopoiesis even if the mechanisms are unknown. In cancers such as thyroid or lung cancer, it has been described as promoter of cell proliferation, G1-to-S-phase transition and inhibitor of apoptosis. However, it negatively regulates self-renewal of liver cancer cells via suppresion of NOTCH2 signaling. This Mus musculus (Mouse) protein is Transcriptional and immune response regulator.